The chain runs to 233 residues: Large ribosomal subunit protein uL1 (233 aa).

It belongs to the universal ribosomal protein uL1 family. In terms of assembly, part of the 50S ribosomal subunit.

In terms of biological role, binds directly to 23S rRNA. The L1 stalk is quite mobile in the ribosome, and is involved in E site tRNA release. Functionally, protein L1 is also a translational repressor protein, it controls the translation of the L11 operon by binding to its mRNA. This Rhizobium etli (strain ATCC 51251 / DSM 11541 / JCM 21823 / NBRC 15573 / CFN 42) protein is Large ribosomal subunit protein uL1.